Here is a 397-residue protein sequence, read N- to C-terminus: CCA-adding enzyme (397 aa).

The ATP site is built by Gly26 and Arg29. Positions 26 and 29 each coordinate CTP. The Mg(2+) site is built by Asp39 and Asp41. Arg110, Asp153, Arg156, Arg159, and Arg162 together coordinate ATP. Residues Arg110, Asp153, Arg156, Arg159, and Arg162 each contribute to the CTP site.

It belongs to the tRNA nucleotidyltransferase/poly(A) polymerase family. Bacterial CCA-adding enzyme type 3 subfamily. In terms of assembly, homodimer. It depends on Mg(2+) as a cofactor.

It carries out the reaction a tRNA precursor + 2 CTP + ATP = a tRNA with a 3' CCA end + 3 diphosphate. The catalysed reaction is a tRNA with a 3' CCA end + 2 CTP + ATP = a tRNA with a 3' CCACCA end + 3 diphosphate. Catalyzes the addition and repair of the essential 3'-terminal CCA sequence in tRNAs without using a nucleic acid template. Adds these three nucleotides in the order of C, C, and A to the tRNA nucleotide-73, using CTP and ATP as substrates and producing inorganic pyrophosphate. tRNA 3'-terminal CCA addition is required both for tRNA processing and repair. Also involved in tRNA surveillance by mediating tandem CCA addition to generate a CCACCA at the 3' terminus of unstable tRNAs. While stable tRNAs receive only 3'-terminal CCA, unstable tRNAs are marked with CCACCA and rapidly degraded. This chain is CCA-adding enzyme, found in Bacillus cytotoxicus (strain DSM 22905 / CIP 110041 / 391-98 / NVH 391-98).